We begin with the raw amino-acid sequence, 148 residues long: Lysozyme C (148 aa).

The N-terminal stretch at 1-18 is a signal peptide; it reads MKALIILGLVLLSVTVQG. Residues 19–148 enclose the C-type lysozyme domain; sequence KIFERCELAR…VSQYVKGCGV (130 aa). Intrachain disulfides connect cysteine 24–cysteine 146, cysteine 48–cysteine 134, cysteine 83–cysteine 99, and cysteine 95–cysteine 113. Active-site residues include glutamate 53 and aspartate 71.

It belongs to the glycosyl hydrolase 22 family. As to quaternary structure, monomer.

It is found in the secreted. It carries out the reaction Hydrolysis of (1-&gt;4)-beta-linkages between N-acetylmuramic acid and N-acetyl-D-glucosamine residues in a peptidoglycan and between N-acetyl-D-glucosamine residues in chitodextrins.. Lysozymes have primarily a bacteriolytic function; those in tissues and body fluids are associated with the monocyte-macrophage system and enhance the activity of immunoagents. The polypeptide is Lysozyme C (LYZ) (Pygathrix nemaeus (Red-shanked douc langur)).